Reading from the N-terminus, the 312-residue chain is 1-phosphofructokinase (312 aa).

ATP-binding positions include 223–228 and 254–255; these read SLGAEG and GD. Asp255 (proton acceptor) is an active-site residue.

Belongs to the carbohydrate kinase PfkB family.

The catalysed reaction is beta-D-fructose 1-phosphate + ATP = beta-D-fructose 1,6-bisphosphate + ADP + H(+). Its function is as follows. Catalyzes the ATP-dependent phosphorylation of fructose-l-phosphate to fructose-l,6-bisphosphate. This Escherichia coli O157:H7 protein is 1-phosphofructokinase (fruK).